The primary structure comprises 451 residues: Cysteine protease ATG4 (451 aa).

Cys-122 serves as the catalytic Nucleophile. Active-site residues include Asp-297 and His-299.

This sequence belongs to the peptidase C54 family. In terms of assembly, interacts with ATG8.

Its subcellular location is the cytoplasm. The protein localises to the nucleus. It localises to the preautophagosomal structure. The catalysed reaction is [protein]-C-terminal L-amino acid-glycyl-phosphatidylethanolamide + H2O = [protein]-C-terminal L-amino acid-glycine + a 1,2-diacyl-sn-glycero-3-phosphoethanolamine. In terms of biological role, cysteine protease that plays a key role in cytoplasm to vacuole transport (Cvt) and autophagy by mediating both proteolytic activation and delipidation of ATG8. Required for selective autophagic degradation of the nucleus (nucleophagy) as well as for mitophagy which contributes to regulate mitochondrial quantity and quality by eliminating the mitochondria to a basal level to fulfill cellular energy requirements and preventing excess ROS production. The protease activity is required for proteolytic activation of ATG8: cleaves the C-terminal amino acid of ATG8 to reveal a C-terminal glycine. ATG8 ubiquitin-like activity requires the exposure of the glycine at the C-terminus for its conjugation to phosphatidylethanolamine (PE) and its insertion to membranes, which is necessary for autophagy. The ATG8-PE conjugate mediates tethering between adjacent membranes and stimulates membrane hemifusion, leading to expansion of the autophagosomal membrane during autophagy. In addition to the protease activity, also catalyzes deconjugation of PE-conjugated forms of ATG8 during macroautophagy: ATG8 delipidation is required to release the protein from membranes, which facilitates multiple events during macroautophagy, and especially for efficient autophagosome biogenesis, the assembly of ATG9-containing tubulovesicular clusters into phagophores/autophagosomes, and for the disassembly of PAS-associated ATG components. ATG8 delipidation by ATG4 also recycles ATG8-PE generated on inappropriate membranes to maintain a reservoir of unlipidated ATG8 that is required for autophagosome formation at the PAS. The polypeptide is Cysteine protease ATG4 (Kluyveromyces marxianus (strain DMKU3-1042 / BCC 29191 / NBRC 104275) (Yeast)).